Here is a 64-residue protein sequence, read N- to C-terminus: Large ribosomal subunit protein bL28 (64 aa).

This sequence belongs to the bacterial ribosomal protein bL28 family.

This Syntrophobacter fumaroxidans (strain DSM 10017 / MPOB) protein is Large ribosomal subunit protein bL28.